We begin with the raw amino-acid sequence, 87 residues long: Ragulator complex protein LAMTOR4 homolog (87 aa).

This sequence belongs to the LAMTOR4 family. As to quaternary structure, part of the Ragulator complex.

The protein resides in the lysosome. Regulator of the TOR pathway, a signaling cascade that promotes cell growth in response to growth factors, energy levels, and amino acids. As part of the Ragulator complex, may activate the TOR signaling cascade in response to amino acids. In Dictyostelium discoideum (Social amoeba), this protein is Ragulator complex protein LAMTOR4 homolog.